The chain runs to 693 residues: Polyribonucleotide nucleotidyltransferase (693 aa).

Mg(2+) contacts are provided by D487 and D493. Positions 554–613 (PRIYTIKINPEKIKDVIGKGGSIIRMLTEETGTVIEIKDDGIVKISAINGEKAKYAIKRI) constitute a KH domain. The S1 motif domain maps to 623–691 (GKIYSGKVTR…RQGRIRLSMK (69 aa)).

Belongs to the polyribonucleotide nucleotidyltransferase family. Component of the RNA degradosome, which is a multiprotein complex involved in RNA processing and mRNA degradation. Mg(2+) is required as a cofactor.

The protein resides in the cytoplasm. It carries out the reaction RNA(n+1) + phosphate = RNA(n) + a ribonucleoside 5'-diphosphate. Functionally, involved in mRNA degradation. Catalyzes the phosphorolysis of single-stranded polyribonucleotides processively in the 3'- to 5'-direction. The chain is Polyribonucleotide nucleotidyltransferase from Buchnera aphidicola subsp. Cinara cedri (strain Cc).